Consider the following 245-residue polypeptide: Phosphoadenosine 5'-phosphosulfate reductase (245 aa).

Catalysis depends on cysteine 239, which acts as the Nucleophile; cysteine thiosulfonate intermediate.

Belongs to the PAPS reductase family. CysH subfamily.

It localises to the cytoplasm. It catalyses the reaction [thioredoxin]-disulfide + sulfite + adenosine 3',5'-bisphosphate + 2 H(+) = [thioredoxin]-dithiol + 3'-phosphoadenylyl sulfate. Its pathway is sulfur metabolism; hydrogen sulfide biosynthesis; sulfite from sulfate: step 3/3. Its function is as follows. Catalyzes the formation of sulfite from phosphoadenosine 5'-phosphosulfate (PAPS) using thioredoxin as an electron donor. In Baumannia cicadellinicola subsp. Homalodisca coagulata, this protein is Phosphoadenosine 5'-phosphosulfate reductase.